Here is a 341-residue protein sequence, read N- to C-terminus: Ketol-acid reductoisomerase (NADP(+)) (341 aa).

The region spanning 2-181 is the KARI N-terminal Rossmann domain; it reads VKVYYNGDAN…GSARAGVIET (180 aa). Residues 25-28, Arg-48, Ser-52, and 82-85 contribute to the NADP(+) site; these read YGSQ and DEHQ. His-107 is a catalytic residue. Gly-133 contributes to the NADP(+) binding site. Positions 182-327 constitute a KARI C-terminal knotted domain; the sequence is TFKEETETDL…RELRKMMPFV (146 aa). Mg(2+) contacts are provided by Asp-190, Glu-194, Glu-226, and Glu-230. Ser-251 is a binding site for substrate.

This sequence belongs to the ketol-acid reductoisomerase family. Mg(2+) serves as cofactor.

It catalyses the reaction (2R)-2,3-dihydroxy-3-methylbutanoate + NADP(+) = (2S)-2-acetolactate + NADPH + H(+). The catalysed reaction is (2R,3R)-2,3-dihydroxy-3-methylpentanoate + NADP(+) = (S)-2-ethyl-2-hydroxy-3-oxobutanoate + NADPH + H(+). It functions in the pathway amino-acid biosynthesis; L-isoleucine biosynthesis; L-isoleucine from 2-oxobutanoate: step 2/4. It participates in amino-acid biosynthesis; L-valine biosynthesis; L-valine from pyruvate: step 2/4. In terms of biological role, involved in the biosynthesis of branched-chain amino acids (BCAA). Catalyzes an alkyl-migration followed by a ketol-acid reduction of (S)-2-acetolactate (S2AL) to yield (R)-2,3-dihydroxy-isovalerate. In the isomerase reaction, S2AL is rearranged via a Mg-dependent methyl migration to produce 3-hydroxy-3-methyl-2-ketobutyrate (HMKB). In the reductase reaction, this 2-ketoacid undergoes a metal-dependent reduction by NADPH to yield (R)-2,3-dihydroxy-isovalerate. This is Ketol-acid reductoisomerase (NADP(+)) from Anoxybacillus flavithermus (strain DSM 21510 / WK1).